A 262-amino-acid chain; its full sequence is Cutinase 2 (262 aa).

Tyr-61 is a poly(ethylene terephthalate) binding site. Ser-131 acts as the Nucleophile in catalysis. 2 residues coordinate poly(ethylene terephthalate): Met-132 and Trp-156. Catalysis depends on charge relay system residues Asp-177 and His-209. An intrachain disulfide couples Cys-242 to Cys-260.

Belongs to the AB hydrolase superfamily.

Its subcellular location is the secreted. The protein resides in the periplasm. It catalyses the reaction a butanoate ester + H2O = an aliphatic alcohol + butanoate + H(+). The catalysed reaction is an acetyl ester + H2O = an aliphatic alcohol + acetate + H(+). It carries out the reaction (ethylene terephthalate)(n) + H2O = (ethylene terephthalate)(n-1) + 4-[(2-hydroxyethoxy)carbonyl]benzoate + H(+). The enzyme catalyses cutin + H2O = cutin monomers.. Catalyzes the hydrolysis of cutin, a polyester that forms the structure of plant cuticle. Shows esterase activity towards p-nitrophenol-linked aliphatic esters (pNP-aliphatic esters). Capable of degrading the plastic poly(ethylene terephthalate) (PET), the most abundant polyester plastic in the world. Capable of degrading the bioplastic poly(lactic acid) (PLLA). In Thermobifida cellulosilytica, this protein is Cutinase 2.